A 95-amino-acid chain; its full sequence is Defensin (95 aa).

Residues 1-17 form the signal peptide; that stretch reads MKNYVFALLVVTAVAIA. A propeptide spanning residues 18 to 55 is cleaved from the precursor; sequence LPNEDKNAPMRVHLLPQKEDESLKLEVTPVKEHHRTRR. 3 disulfides stabilise this stretch: cysteine 58/cysteine 85, cysteine 71/cysteine 91, and cysteine 75/cysteine 93.

The protein belongs to the invertebrate defensin family. Type 1 subfamily.

It localises to the secreted. Functionally, antibacterial peptide mostly active against Gram-positive bacteria. In Formica aquilonia (Red wood ant), this protein is Defensin.